Consider the following 139-residue polypeptide: Ribulose bisphosphate carboxylase small subunit (139 aa).

Belongs to the RuBisCO small chain family. As to quaternary structure, heterohexadecamer of 8 large and 8 small subunits.

Its subcellular location is the plastid. It is found in the chloroplast. Functionally, ruBisCO catalyzes two reactions: the carboxylation of D-ribulose 1,5-bisphosphate, the primary event in carbon dioxide fixation, as well as the oxidative fragmentation of the pentose substrate in the photorespiration process. Both reactions occur simultaneously and in competition at the same active site. Although the small subunit is not catalytic it is essential for maximal activity. The sequence is that of Ribulose bisphosphate carboxylase small subunit from Trieres chinensis (Marine centric diatom).